The following is a 556-amino-acid chain: Urocanate hydratase (556 aa).

NAD(+)-binding positions include 52–53 (GG), Gln-130, 176–178 (GMG), Glu-196, Arg-201, 242–243 (NA), 263–267 (QTSAH), 273–274 (YL), and Tyr-322. Cys-410 is an active-site residue. Gly-492 serves as a coordination point for NAD(+).

Belongs to the urocanase family. NAD(+) serves as cofactor.

Its subcellular location is the cytoplasm. The enzyme catalyses 4-imidazolone-5-propanoate = trans-urocanate + H2O. The protein operates within amino-acid degradation; L-histidine degradation into L-glutamate; N-formimidoyl-L-glutamate from L-histidine: step 2/3. Its function is as follows. Catalyzes the conversion of urocanate to 4-imidazolone-5-propionate. The sequence is that of Urocanate hydratase from Shewanella woodyi (strain ATCC 51908 / MS32).